Reading from the N-terminus, the 464-residue chain is Citrate synthase 5, mitochondrial (464 aa).

Residues 1–25 (MVFFRSVSAISRLRSRAVQQSSLSN) constitute a mitochondrion transit peptide. Catalysis depends on residues His300, His346, and Asp401.

It belongs to the citrate synthase family.

Its subcellular location is the mitochondrion matrix. The catalysed reaction is oxaloacetate + acetyl-CoA + H2O = citrate + CoA + H(+). The protein operates within carbohydrate metabolism; tricarboxylic acid cycle; isocitrate from oxaloacetate: step 1/2. This chain is Citrate synthase 5, mitochondrial (CSY5), found in Arabidopsis thaliana (Mouse-ear cress).